Consider the following 348-residue polypeptide: D-erythrose-4-phosphate dehydrogenase (348 aa).

NAD(+) is bound by residues 12-13 (RI) and Arg81. Residues 154-156 (SCT), Arg200, 213-214 (TK), and Arg236 each bind substrate. Cys155 serves as the catalytic Nucleophile. Asn318 is an NAD(+) binding site.

This sequence belongs to the glyceraldehyde-3-phosphate dehydrogenase family. Epd subfamily. As to quaternary structure, homotetramer.

The protein localises to the cytoplasm. It carries out the reaction D-erythrose 4-phosphate + NAD(+) + H2O = 4-phospho-D-erythronate + NADH + 2 H(+). Its pathway is cofactor biosynthesis; pyridoxine 5'-phosphate biosynthesis; pyridoxine 5'-phosphate from D-erythrose 4-phosphate: step 1/5. Catalyzes the NAD-dependent conversion of D-erythrose 4-phosphate to 4-phosphoerythronate. The chain is D-erythrose-4-phosphate dehydrogenase from Salmonella agona (strain SL483).